Consider the following 433-residue polypeptide: Poly(A) ribonuclease POP2 (433 aa).

Residue Met-1 is modified to N-acetylmethionine. The disordered stretch occupies residues 78 to 98 (LLTQQQQQQQQQQQPFNIGTP). Residues 81 to 91 (QQQQQQQQQQQ) show a composition bias toward low complexity. Thr-97 is subject to Phosphothreonine; by YAK1. Residues Ser-188, Glu-190, Asp-310, and Gln-394 each contribute to the a divalent metal cation site.

Belongs to the CAF1 family. Subunit of the 1.0 MDa CCR4-NOT core complex that contains CCR4, CAF1, NOT1, NOT2, NOT3, NOT4, NOT5, CAF40 and CAF130. In the complex interacts with NOT1. The core complex probably is part of a less characterized 1.9 MDa CCR4-NOT complex. The cofactor is Mg(2+).

The protein resides in the cytoplasm. The protein localises to the nucleus. The catalysed reaction is Exonucleolytic cleavage of poly(A) to 5'-AMP.. In terms of biological role, acts as a probably catalytic component of the CCR4-NOT core complex, which in the nucleus seems to be a general transcription factor, and in the cytoplasm the major mRNA deadenylase involved in mRNA turnover. In vitro, POP2 has 3'-exoribonuclease activity with a preference for poly(A) RNAs, but also degrades poly(U) and poly(C) RNAs. Is part of a glucose-sensing system involved in growth control in response to glucose availability. This is Poly(A) ribonuclease POP2 (POP2) from Saccharomyces cerevisiae (strain ATCC 204508 / S288c) (Baker's yeast).